A 354-amino-acid polypeptide reads, in one-letter code: Glutamine synthetase (354 aa).

One can recognise a GS beta-grasp domain in the interval 22-101 (IQAEYVWVDG…VLAETYNSDG (80 aa)). One can recognise a GS catalytic domain in the interval 108–354 (FRHHAAKVME…IIVETTLLNA (247 aa)).

This sequence belongs to the glutamine synthetase family. Homooctamer.

The protein resides in the cytoplasm. It carries out the reaction L-glutamate + NH4(+) + ATP = L-glutamine + ADP + phosphate + H(+). The chain is Glutamine synthetase (GLN1) from Hebeloma cylindrosporum.